Reading from the N-terminus, the 113-residue chain is Cytochrome c (113 aa).

N-acetylalanine is present on Ala-1. Cys-22, Cys-25, and His-26 together coordinate heme c. Residue Lys-80 is modified to N6,N6,N6-trimethyllysine. Met-88 provides a ligand contact to heme c. Lys-94 is subject to N6,N6,N6-trimethyllysine.

The protein belongs to the cytochrome c family. In terms of processing, binds 1 heme c group covalently per subunit.

Its subcellular location is the mitochondrion intermembrane space. Electron carrier protein. The oxidized form of the cytochrome c heme group can accept an electron from the heme group of the cytochrome c1 subunit of cytochrome reductase. Cytochrome c then transfers this electron to the cytochrome oxidase complex, the final protein carrier in the mitochondrial electron-transport chain. This is Cytochrome c from Ginkgo biloba (Ginkgo).